Consider the following 295-residue polypeptide: MAIPMRPRLLAALAPTFLGFLLLQVAVGAGTPPGKAFNLTWISTDFKTILEWQPKPTNYTYTVQISDRSRNWKYKCTGTTDTECDLTDEIVKDVNWTYEARVLSVPWRNSTHGKETLFGTHGEEPPFTNARKFLPYRDTKIGQPVIQKYEQGGTKLKVTVKDSFTLVRKNGTFLTLRQVFGNDLGYILTYRKDSSTGRKTNTTHTNEFLIDVEKGVSYCFFAQAVIFSRKTNHKSPESITKCTEQWKSVLGETLIIVGAVVFLVTVFIILLTISLCKRRKNRAGQKRKNTPSRLA.

Residues 1–28 (MAIPMRPRLLAALAPTFLGFLLLQVAVG) form the signal peptide. Residues 29–252 (AGTPPGKAFN…TEQWKSVLGE (224 aa)) lie on the Extracellular side of the membrane. Residues asparagine 38 and asparagine 58 are each glycosylated (N-linked (GlcNAc...) asparagine). A disulfide bridge connects residues cysteine 76 and cysteine 84. Asparagine 95, asparagine 109, asparagine 170, and asparagine 201 each carry an N-linked (GlcNAc...) asparagine glycan. Cysteine 219 and cysteine 242 are oxidised to a cystine. Residues 246 to 248 (WKS) carry the WKS motif motif. A helical membrane pass occupies residues 253 to 275 (TLIIVGAVVFLVTVFIILLTISL). Cysteine 276 carries S-palmitoyl cysteine lipidation. The Cytoplasmic segment spans residues 276-295 (CKRRKNRAGQKRKNTPSRLA).

The protein belongs to the tissue factor family. In terms of assembly, interacts with HSPE; the interaction, inhibited by heparin, promotes the generation of activated factor X and activates coagulation in the presence of activated factor VII.

It is found in the membrane. Its function is as follows. Initiates blood coagulation by forming a complex with circulating factor VII or VIIa. The [TF:VIIa] complex activates factors IX or X by specific limited proteolysis. TF plays a role in normal hemostasis by initiating the cell-surface assembly and propagation of the coagulation protease cascade. In Rattus norvegicus (Rat), this protein is Tissue factor (F3).